A 410-amino-acid chain; its full sequence is FAS1 domain-containing protein CaO19.3004 (410 aa).

Positions 1-18 (MKLSKLLQLAVFSSLVTS) are cleaved as a signal peptide. 2 stretches are compositionally biased toward basic and acidic residues: residues 64–73 (NAKFKRDPKN) and 83–96 (GSAE…REPK). Positions 64-98 (NAKFKRDPKNVIDPASLKEGSAEEEQKDKREPKNL) are disordered. Residues 247 to 407 (NNLLQSILPQ…GFVLIINDSL (161 aa)) form the FAS1 domain.

The protein localises to the vacuole. This Candida albicans (strain SC5314 / ATCC MYA-2876) (Yeast) protein is FAS1 domain-containing protein CaO19.3004.